The sequence spans 432 residues: MPAVVLIGAQWGDEGKGKVTDLLGGRAQWVVRYQGGNNAGHTVVLPTGENFTLHLIPSGVLTPGVTNVIGNGVVVDPGVLLSELQGLEDRGVDTSQLLISADAHLLMPYHVAIDKVTERYMGNKKIGTTGRGIGPCYQDKIARMGIRVADVLEPGELTHKIEAALEFKNQVLVKIYNRKALDLAQVVETLLEQAQQFRHRITDTRLLLNDALEAGETVLLEGAQGTLLDVDHGTYPYVTSSNPTAGGAALGSGIGPTRIHTVLGILKAYTTRVGSGPFPTELFDENGEYLAKTGSEIGVTTGRRRRCGWFDAVIARYATRVNGITDYFLTKLDVLSSLETVPVCVGYQIAGVRTHDMPITQSDLARAEPIYEELPGWWEDISGAREFEDLPAKARDYVLRLEELAGAQVACIGVGPGRDQTIVRCDVLRSRR.

Residues 12–18 (GDEGKGK) and 40–42 (GHT) contribute to the GTP site. The Proton acceptor role is filled by Asp13. Mg(2+) contacts are provided by Asp13 and Gly40. IMP-binding positions include 13 to 16 (DEGK), 38 to 41 (NAGH), Thr129, Arg143, Gln224, Thr239, and Arg303. The Proton donor role is filled by His41. 299-305 (VTTGRRR) contacts substrate. GTP contacts are provided by residues Arg305, 331-333 (KLD), and 413-415 (GVG).

This sequence belongs to the adenylosuccinate synthetase family. In terms of assembly, homodimer. It depends on Mg(2+) as a cofactor.

The protein localises to the cytoplasm. It catalyses the reaction IMP + L-aspartate + GTP = N(6)-(1,2-dicarboxyethyl)-AMP + GDP + phosphate + 2 H(+). It participates in purine metabolism; AMP biosynthesis via de novo pathway; AMP from IMP: step 1/2. Its function is as follows. Plays an important role in the de novo pathway of purine nucleotide biosynthesis. Catalyzes the first committed step in the biosynthesis of AMP from IMP. This is Adenylosuccinate synthetase from Mycobacterium leprae (strain TN).